The sequence spans 383 residues: 3-ketosteroid-9-alpha-monooxygenase, oxygenase component (383 aa).

A Rieske domain is found at 24 to 126 (WHCLGPVKNF…TDVRGGLLFV (103 aa)). [2Fe-2S] cluster-binding residues include C65, H67, C84, and H87. Residues N173, H179, H184, and D302 each contribute to the Fe cation site.

In terms of assembly, homotrimer. The two-component system 3-ketosteroid-9-alpha-monooxygenase is composed of an oxygenase component KshA and a reductase component KshB. The cofactor is [2Fe-2S] cluster. It depends on Fe cation as a cofactor.

It catalyses the reaction androsta-1,4-diene-3,17-dione + 2 reduced [2Fe-2S]-[ferredoxin] + O2 + 2 H(+) = 9alpha-hydroxyandrosta-1,4-diene-3,17-dione + 2 oxidized [2Fe-2S]-[ferredoxin] + H2O. The protein operates within lipid metabolism; steroid biosynthesis. Its function is as follows. Involved in the degradation of cholesterol. Catalyzes the introduction of a 9a-hydroxyl moiety into 1,4-androstadiene-3,17-dione (ADD) to yield the 9alpha-hydroxy-1,4-androstadiene-3,17-dione (9OHADD) intermediate which spontaneously form 3-hydroxy-9,10-seconandrost-1,3,5(10)-triene-9,17-dione (HSA) via the meta-cleavage of ring B with concomitant aromatization of ring A. In Mycolicibacterium smegmatis (strain ATCC 700084 / mc(2)155) (Mycobacterium smegmatis), this protein is 3-ketosteroid-9-alpha-monooxygenase, oxygenase component (kshA).